The following is a 61-amino-acid chain: L-amino-acid oxidase (61 aa).

Met43–Ala44 lines the FAD pocket.

Belongs to the flavin monoamine oxidase family. FIG1 subfamily. In terms of assembly, homodimer; non-covalently linked. The cofactor is FAD. In terms of processing, N-glycosylated. In terms of tissue distribution, expressed by the venom gland.

It localises to the secreted. It catalyses the reaction an L-alpha-amino acid + O2 + H2O = a 2-oxocarboxylate + H2O2 + NH4(+). The catalysed reaction is L-leucine + O2 + H2O = 4-methyl-2-oxopentanoate + H2O2 + NH4(+). Functionally, catalyzes an oxidative deamination of predominantly hydrophobic and aromatic L-amino acids, thus producing hydrogen peroxide that may contribute to the diverse toxic effects of this enzyme. Shows activity on L-Leu. Exhibits diverse biological activities, such as apoptosis, antibacterial activities against both Gram-negative and Gram-positive bacteria and antiparasitic activities, as well as induction of platelet aggregation. Effects of snake L-amino oxidases on platelets are controversial, since they either induce aggregation or inhibit agonist-induced aggregation. These different effects are probably due to different experimental conditions. This protein may also induce hemorrhage, hemolysis, and edema. This is L-amino-acid oxidase from Crotalus durissus cascavella (Northeastern Brazilian rattlesnake).